The sequence spans 418 residues: Dwarfin sma-2 (418 aa).

One can recognise an MH1 domain in the interval 8–134 (KKITERLKWK…YKRVHATGVL (127 aa)). Zn(2+) is bound by residues Cys-62, Cys-107, Cys-119, and His-124. Residues 222 to 418 (WATVSYYELN…PTPRPISSIS (197 aa)) form the MH2 domain.

The protein belongs to the dwarfin/SMAD family.

The protein resides in the cytoplasm. The protein localises to the nucleus. Involved in TGF-beta pathway. Plays a role in male tail tip morphogenesis. This chain is Dwarfin sma-2, found in Caenorhabditis elegans.